The chain runs to 159 residues: Transcriptional repressor NrdR (159 aa).

Residues 3–34 (CPFCHTPDTSVIDSRVSEEGDRIRRRRRCPHC) fold into a zinc finger. Residues 49-139 (PQVVKQDGNR…VYRSFQGAAD (91 aa)) form the ATP-cone domain.

The protein belongs to the NrdR family. Zn(2+) is required as a cofactor.

Negatively regulates transcription of bacterial ribonucleotide reductase nrd genes and operons by binding to NrdR-boxes. The polypeptide is Transcriptional repressor NrdR (Nitrosospira multiformis (strain ATCC 25196 / NCIMB 11849 / C 71)).